A 447-amino-acid chain; its full sequence is Phosphoglucosamine mutase (447 aa).

Ser-103 serves as the catalytic Phosphoserine intermediate. Mg(2+)-binding residues include Ser-103, Asp-242, Asp-244, and Asp-246. Phosphoserine is present on Ser-103.

It belongs to the phosphohexose mutase family. It depends on Mg(2+) as a cofactor. In terms of processing, activated by phosphorylation.

The catalysed reaction is alpha-D-glucosamine 1-phosphate = D-glucosamine 6-phosphate. Functionally, catalyzes the conversion of glucosamine-6-phosphate to glucosamine-1-phosphate. This Jannaschia sp. (strain CCS1) protein is Phosphoglucosamine mutase.